Reading from the N-terminus, the 639-residue chain is ATP-dependent RNA helicase DDX51 (639 aa).

Residues M1 to P131 form a disordered region. A2 carries the N-acetylalanine modification. The span at A24–E48 shows a compositional bias: basic and acidic residues. Over residues E50–A63 the composition is skewed to low complexity. Over residues G64–V76 the composition is skewed to basic residues. The residue at position 79 (S79) is a Phosphoserine. A compositionally biased stretch (basic and acidic residues) spans A94–E105. The Q motif signature appears at Y193–I201. The Helicase ATP-binding domain maps to G215–F424. A228–T235 lines the ATP pocket. A DEAD box motif is present at residues D343 to D346. S432 carries the phosphoserine modification. Positions I467–L615 constitute a Helicase C-terminal domain.

It belongs to the DEAD box helicase family. DDX51/DBP6 subfamily.

The protein resides in the nucleus. Its subcellular location is the nucleolus. The enzyme catalyses ATP + H2O = ADP + phosphate + H(+). Its function is as follows. ATP-binding RNA helicase involved in the biogenesis of 60S ribosomal subunits. This Mus musculus (Mouse) protein is ATP-dependent RNA helicase DDX51 (Ddx51).